We begin with the raw amino-acid sequence, 400 residues long: Elongation factor Tu (400 aa).

Positions 10 to 209 (KPHVNIGTIG…AVDKYIPTPQ (200 aa)) constitute a tr-type G domain. Positions 19-26 (GHVDHGKT) are G1. 19–26 (GHVDHGKT) is a binding site for GTP. Threonine 26 is a Mg(2+) binding site. A G2 region spans residues 60–64 (GITIN). Positions 81–84 (DCPG) are G3. Residues 81 to 85 (DCPGH) and 136 to 139 (NKVD) each bind GTP. The G4 stretch occupies residues 136-139 (NKVD). The interval 174–176 (SAL) is G5.

It belongs to the TRAFAC class translation factor GTPase superfamily. Classic translation factor GTPase family. EF-Tu/EF-1A subfamily. As to quaternary structure, monomer.

The protein localises to the cytoplasm. The catalysed reaction is GTP + H2O = GDP + phosphate + H(+). In terms of biological role, GTP hydrolase that promotes the GTP-dependent binding of aminoacyl-tRNA to the A-site of ribosomes during protein biosynthesis. This Caldicellulosiruptor bescii (strain ATCC BAA-1888 / DSM 6725 / KCTC 15123 / Z-1320) (Anaerocellum thermophilum) protein is Elongation factor Tu.